We begin with the raw amino-acid sequence, 995 residues long: Integrator complex subunit 8 (995 aa).

Thr-18 carries the post-translational modification Phosphothreonine. The WFEF motif signature appears at 24–29 (WFEFLL). 4 TPR repeats span residues 250-288 (CQVCYDLGAAYFQQGSTNSAVYENAREKFFRTKELIAEI), 320-356 (SQQLTPYSQVHICLRSGNYQEVIQIFIEDNLTLSLPV), 570-603 (VYILMAKGLHCSTVKDFSHAKQLFAACLELVTEF), and 833-866 (HSWLIIQADIYFATNQYSAALHYYLQAGAVCSDF).

Belongs to the Integrator subunit 8 family. As to quaternary structure, component of the Integrator complex, composed of core subunits INTS1, INTS2, INTS3, INTS4, INTS5, INTS6, INTS7, INTS8, INTS9/RC74, INTS10, INTS11/CPSF3L, INTS12, INTS13, INTS14 and INTS15. The core complex associates with protein phosphatase 2A subunits PPP2CA and PPP2R1A, to form the Integrator-PP2A (INTAC) complex.

Its subcellular location is the nucleus. The protein resides in the chromosome. Its function is as follows. Component of the integrator complex, a multiprotein complex that terminates RNA polymerase II (Pol II) transcription in the promoter-proximal region of genes. The integrator complex provides a quality checkpoint during transcription elongation by driving premature transcription termination of transcripts that are unfavorably configured for transcriptional elongation: the complex terminates transcription by (1) catalyzing dephosphorylation of the C-terminal domain (CTD) of Pol II subunit POLR2A/RPB1 and SUPT5H/SPT5, (2) degrading the exiting nascent RNA transcript via endonuclease activity and (3) promoting the release of Pol II from bound DNA. The integrator complex is also involved in terminating the synthesis of non-coding Pol II transcripts, such as enhancer RNAs (eRNAs), small nuclear RNAs (snRNAs), telomerase RNAs and long non-coding RNAs (lncRNAs). Within the integrator complex, INTS8 is required for the recruitment of protein phosphatase 2A (PP2A) to transcription pause-release checkpoint. This Homo sapiens (Human) protein is Integrator complex subunit 8.